The chain runs to 906 residues: DNA gyrase subunit A (906 aa).

The Topo IIA-type catalytic domain occupies 35-524 (IPDVRDGLKP…GEFDQDIEDL (490 aa)). Y123 serves as the catalytic O-(5'-phospho-DNA)-tyrosine intermediate. Positions 551-557 (QKRGGKG) match the GyrA-box motif. The interval 886–906 (SESEEDSELEEDLEQAEEVYT) is disordered.

It belongs to the type II topoisomerase GyrA/ParC subunit family. As to quaternary structure, heterotetramer, composed of two GyrA and two GyrB chains. In the heterotetramer, GyrA contains the active site tyrosine that forms a transient covalent intermediate with DNA, while GyrB binds cofactors and catalyzes ATP hydrolysis.

It localises to the cytoplasm. It catalyses the reaction ATP-dependent breakage, passage and rejoining of double-stranded DNA.. In terms of biological role, a type II topoisomerase that negatively supercoils closed circular double-stranded (ds) DNA in an ATP-dependent manner to modulate DNA topology and maintain chromosomes in an underwound state. Negative supercoiling favors strand separation, and DNA replication, transcription, recombination and repair, all of which involve strand separation. Also able to catalyze the interconversion of other topological isomers of dsDNA rings, including catenanes and knotted rings. Type II topoisomerases break and join 2 DNA strands simultaneously in an ATP-dependent manner. The protein is DNA gyrase subunit A of Rickettsia felis (strain ATCC VR-1525 / URRWXCal2) (Rickettsia azadi).